The primary structure comprises 85 residues: High-potential iron-sulfur protein (85 aa).

Residues Cys-43, Cys-46, Cys-63, and Cys-77 each contribute to the [4Fe-4S] cluster site.

The protein belongs to the high-potential iron-sulfur protein (HiPIP) family. As to quaternary structure, homodimer.

The protein localises to the periplasm. In terms of biological role, specific class of high-redox-potential 4Fe-4S ferredoxins. Functions in anaerobic electron transport in most purple and in some other photosynthetic bacteria and in at least one genus (Paracoccus) of halophilic, denitrifying bacteria. The sequence is that of High-potential iron-sulfur protein from Allochromatium warmingii (Chromatium warmingii).